Consider the following 190-residue polypeptide: Recombination protein RecR (190 aa).

The C4-type zinc finger occupies 58 to 73 (CEQCGALSENELCEIC). The region spanning 81–167 (NILCIVESPK…TFSKIAQGIP (87 aa)) is the Toprim domain.

Belongs to the RecR family.

Functionally, may play a role in DNA repair. It seems to be involved in an RecBC-independent recombinational process of DNA repair. It may act with RecF and RecO. The sequence is that of Recombination protein RecR from Campylobacter jejuni (strain RM1221).